A 383-amino-acid polypeptide reads, in one-letter code: Succinyl-diaminopimelate desuccinylase (383 aa).

Residue histidine 69 participates in Zn(2+) binding. Aspartate 71 is a catalytic residue. Aspartate 103 provides a ligand contact to Zn(2+). Glutamate 137 acts as the Proton acceptor in catalysis. Zn(2+) is bound by residues glutamate 138, glutamate 166, and histidine 357.

The protein belongs to the peptidase M20A family. DapE subfamily. Homodimer. The cofactor is Zn(2+). Co(2+) is required as a cofactor.

It carries out the reaction N-succinyl-(2S,6S)-2,6-diaminopimelate + H2O = (2S,6S)-2,6-diaminopimelate + succinate. It functions in the pathway amino-acid biosynthesis; L-lysine biosynthesis via DAP pathway; LL-2,6-diaminopimelate from (S)-tetrahydrodipicolinate (succinylase route): step 3/3. Catalyzes the hydrolysis of N-succinyl-L,L-diaminopimelic acid (SDAP), forming succinate and LL-2,6-diaminopimelate (DAP), an intermediate involved in the bacterial biosynthesis of lysine and meso-diaminopimelic acid, an essential component of bacterial cell walls. The chain is Succinyl-diaminopimelate desuccinylase from Rickettsia prowazekii (strain Madrid E).